A 501-amino-acid chain; its full sequence is Lysine--tRNA ligase (501 aa).

Residues Glu-402 and Glu-409 each contribute to the Mg(2+) site.

This sequence belongs to the class-II aminoacyl-tRNA synthetase family. In terms of assembly, homodimer. Requires Mg(2+) as cofactor.

It is found in the cytoplasm. It catalyses the reaction tRNA(Lys) + L-lysine + ATP = L-lysyl-tRNA(Lys) + AMP + diphosphate. The sequence is that of Lysine--tRNA ligase from Helicobacter pylori (strain G27).